The chain runs to 486 residues: N-succinylglutamate 5-semialdehyde dehydrogenase (486 aa).

220 to 225 lines the NAD(+) pocket; the sequence is GSSRTG. Active-site residues include Glu-243 and Cys-277.

Belongs to the aldehyde dehydrogenase family. AstD subfamily.

The enzyme catalyses N-succinyl-L-glutamate 5-semialdehyde + NAD(+) + H2O = N-succinyl-L-glutamate + NADH + 2 H(+). The protein operates within amino-acid degradation; L-arginine degradation via AST pathway; L-glutamate and succinate from L-arginine: step 4/5. In terms of biological role, catalyzes the NAD-dependent reduction of succinylglutamate semialdehyde into succinylglutamate. The protein is N-succinylglutamate 5-semialdehyde dehydrogenase of Shewanella putrefaciens (strain CN-32 / ATCC BAA-453).